We begin with the raw amino-acid sequence, 150 residues long: Ribonuclease H (150 aa).

The region spanning 7 to 148 (ESNIVEIWTD…ADQLATKARM (142 aa)) is the RNase H type-1 domain. Asp16, Glu54, Asp76, and Asp140 together coordinate Mg(2+).

Belongs to the RNase H family. As to quaternary structure, monomer. Mg(2+) serves as cofactor.

It is found in the cytoplasm. It catalyses the reaction Endonucleolytic cleavage to 5'-phosphomonoester.. Functionally, endonuclease that specifically degrades the RNA of RNA-DNA hybrids. This is Ribonuclease H from Granulibacter bethesdensis (strain ATCC BAA-1260 / CGDNIH1).